The following is a 160-amino-acid chain: Endoribonuclease YbeY (160 aa).

The Zn(2+) site is built by histidine 112, histidine 116, and histidine 122. Positions 141 to 160 (ELGHPDPYACDDEEPPSKEK) are disordered.

This sequence belongs to the endoribonuclease YbeY family. The cofactor is Zn(2+).

It is found in the cytoplasm. In terms of biological role, single strand-specific metallo-endoribonuclease involved in late-stage 70S ribosome quality control and in maturation of the 3' terminus of the 16S rRNA. This chain is Endoribonuclease YbeY, found in Pseudomonas paraeruginosa (strain DSM 24068 / PA7) (Pseudomonas aeruginosa (strain PA7)).